The primary structure comprises 1372 residues: DNA-directed RNA polymerase subunit beta (1372 aa).

It belongs to the RNA polymerase beta chain family. As to quaternary structure, the RNAP catalytic core consists of 2 alpha, 1 beta, 1 beta' and 1 omega subunit. When a sigma factor is associated with the core the holoenzyme is formed, which can initiate transcription.

The enzyme catalyses RNA(n) + a ribonucleoside 5'-triphosphate = RNA(n+1) + diphosphate. In terms of biological role, DNA-dependent RNA polymerase catalyzes the transcription of DNA into RNA using the four ribonucleoside triphosphates as substrates. The chain is DNA-directed RNA polymerase subunit beta from Bradyrhizobium diazoefficiens (strain JCM 10833 / BCRC 13528 / IAM 13628 / NBRC 14792 / USDA 110).